A 206-amino-acid polypeptide reads, in one-letter code: Large ribosomal subunit protein uL22m (206 aa).

A mitochondrion-targeting transit peptide spans 1–40 (MAAALLRELGALRVPNLRIWATQTLRVLPPSCIHTSASLD).

The protein belongs to the universal ribosomal protein uL22 family. Component of the mitochondrial ribosome large subunit (39S) which comprises a 16S rRNA and about 50 distinct proteins.

The protein localises to the mitochondrion. The sequence is that of Large ribosomal subunit protein uL22m (Mrpl22) from Mus musculus (Mouse).